A 262-amino-acid chain; its full sequence is MNFVVLTLFPLMFPAFAGHGIVRRAVEQGLVDIEALNIRDFAEGRHSTTDDRPYGGGNGMVLKPEPLAKAIRAAKEVHTDARVVFLGPRGRLFDQETAARLAGGKDIIMVCGRYEGIDERIAATLIDEEISIGDYILSGGETAAMVVMDAIIRLIPGALGNESSAEQESFSNQLLEHSHFTRPPVFEGMETPEILLSGDHGKIDQWRTRASLLYTLANRPDLLEGREFSKEEITILENWGRQIADIIRTQGLHGPDALSRNR.

S-adenosyl-L-methionine is bound by residues Gly-112 and 132-137 (IGDYIL).

Belongs to the RNA methyltransferase TrmD family. As to quaternary structure, homodimer.

The protein resides in the cytoplasm. The enzyme catalyses guanosine(37) in tRNA + S-adenosyl-L-methionine = N(1)-methylguanosine(37) in tRNA + S-adenosyl-L-homocysteine + H(+). Its function is as follows. Specifically methylates guanosine-37 in various tRNAs. The sequence is that of tRNA (guanine-N(1)-)-methyltransferase from Desulfatibacillum aliphaticivorans.